The primary structure comprises 663 residues: Ankyrin repeat and SAM domain-containing protein 3 (663 aa).

The tract at residues 1 to 421 (MSELSDEASE…PGSEPQAEKS (421 aa)) is interaction with NEK7. Serine 2 and serine 5 each carry phosphoserine. ANK repeat units follow at residues 34–64 (DVPLDLHTAASIGQYEVVKECVQRRELDLNK), 68–97 (GGWTPLMYASYIGHDTIVHLLLEAGVSVNV), 101–130 (EGQTPLMLASSCGNESIAYFLLQQGAELEM), 134–163 (QGWTALFHCTSAGHQQMVKFLLESGANANV), 168–197 (YGFTPLMEAAAAGHEIIVQYFLNHGVKVDT), and 201–220 (SGATARMLAKQYGHMKIVAL). 3-hydroxyasparagine is present on asparagine 96. Residues serine 201, serine 225, serine 243, serine 244, and serine 245 each carry the phosphoserine modification. Disordered stretches follow at residues 242-261 (LSSSDESWPVPQRQRPCRKK) and 278-425 (TGLG…PYSG). Threonine 318 is modified (phosphothreonine). Serine 319 is modified (phosphoserine). A compositionally biased stretch (basic and acidic residues) spans 322 to 337 (NERDVESSSSSSREEP). Phosphoserine is present on residues serine 366, serine 369, and serine 373. Over residues 378–395 (KSSVRKQTRTYLKNKSRH) the composition is skewed to basic residues. The SAM domain occupies 424 to 487 (SGPQDLATLL…TSAIARWHSS (64 aa)). Residues 500–575 (ADRLEAEMQE…AALVLDQLRA (76 aa)) are a coiled coil. Phosphoserine is present on serine 540. Disordered stretches follow at residues 585–604 (KQHHSPSEATQNPPFLPADS) and 637–663 (AEPGETTDAEWEEMEGTIARRDDSDVG). Positions 641-651 (ETTDAEWEEME) are enriched in acidic residues. Positions 654-663 (IARRDDSDVG) are enriched in basic and acidic residues.

As to quaternary structure, homooligomer. Interacts (via SAM domain) with ANKS6 (via SAM domain). Interacts with BICC1. Interacts with NPHP1. Interacts with NEK8. Interacts with HIF1AN. Interacts with NEK7; this interaction alters the subcellular distribution of NEK7 by preventing its nuclear translocation. Post-translationally, hydroxylated at Asn-96, most probably by HIF1AN. In terms of processing, phosphorylations at Ser-5, Ser-225, Thr-318, Ser-319, Ser-366 and Ser-369 occur in a NEK7-dependent manner. Polyubiquitinated.

The protein localises to the cell projection. Its subcellular location is the cilium. It is found in the cytoplasm. Functionally, may be involved in vasopressin signaling in the kidney. The chain is Ankyrin repeat and SAM domain-containing protein 3 (Anks3) from Rattus norvegicus (Rat).